Consider the following 82-residue polypeptide: MSYDKVSQAQSIIIGTKQTVKALKRDSVKEIVVAKDADPALTASVTKLAQEKGVDILVVDSMKKLGKACGIEVGAAAVAIML.

This sequence belongs to the eukaryotic ribosomal protein eL8 family.

This Bacillus pumilus (strain SAFR-032) protein is RNA-binding protein BPUM_0095.